The sequence spans 120 residues: MTNEEMISAIKEMSVLELNDLVKAIEEEFGVTAAAPVAAAGAAGGAVEEEKTEFDVVLTSAGASKIKVVKAVREITGLGLKDAKDLVDNAPKPIKEGVSKEEAEEVQGKLEEAGASVEVK.

Residues 95-112 are compositionally biased toward basic and acidic residues; the sequence is KEGVSKEEAEEVQGKLEE. Residues 95 to 120 form a disordered region; the sequence is KEGVSKEEAEEVQGKLEEAGASVEVK.

It belongs to the bacterial ribosomal protein bL12 family. In terms of assembly, homodimer. Part of the ribosomal stalk of the 50S ribosomal subunit. Forms a multimeric L10(L12)X complex, where L10 forms an elongated spine to which 2 to 4 L12 dimers bind in a sequential fashion. Binds GTP-bound translation factors.

Functionally, forms part of the ribosomal stalk which helps the ribosome interact with GTP-bound translation factors. Is thus essential for accurate translation. In Oceanobacillus iheyensis (strain DSM 14371 / CIP 107618 / JCM 11309 / KCTC 3954 / HTE831), this protein is Large ribosomal subunit protein bL12.